The following is a 511-amino-acid chain: NADH-quinone oxidoreductase subunit N 1 (511 aa).

14 consecutive transmembrane segments (helical) span residues 15-35, 46-66, 89-109, 120-140, 142-162, 177-197, 221-241, 264-284, 289-309, 317-337, 347-367, 393-413, 426-446, and 471-491; these read LALPMLVLSGFAVAILLLDLV, ALALAGLAAATMSLAKVWQAV, FAIYFYLLFIVGAAVAILMSI, GEYHALILFATIGMMCMASGM, LILLFVGLELMALSTYVLVGF, LLLGAFSSGIFAYGLSLFYGL, PIALLALITTATGLLFKIAAV, VAVKAAGWAMLLRIFLFMLWP, YTPILIFVAVATMIGGNFAAL, LLAYSSISHVGYMLLGLVASD, GILVYLAVYTFMNLGAFAVIT, AVLLLVFLLSLAGIPPLAGFW, GHYTLAVVAVLFAVLGMYYYL, and AALWISALGTLGIGLFPEVFL.

This sequence belongs to the complex I subunit 2 family. As to quaternary structure, NDH-1 is composed of 14 different subunits. Subunits NuoA, H, J, K, L, M, N constitute the membrane sector of the complex.

It localises to the cell inner membrane. It carries out the reaction a quinone + NADH + 5 H(+)(in) = a quinol + NAD(+) + 4 H(+)(out). Functionally, NDH-1 shuttles electrons from NADH, via FMN and iron-sulfur (Fe-S) centers, to quinones in the respiratory chain. The immediate electron acceptor for the enzyme in this species is believed to be ubiquinone. Couples the redox reaction to proton translocation (for every two electrons transferred, four hydrogen ions are translocated across the cytoplasmic membrane), and thus conserves the redox energy in a proton gradient. The sequence is that of NADH-quinone oxidoreductase subunit N 1 from Koribacter versatilis (strain Ellin345).